Consider the following 398-residue polypeptide: Phospholipase C (398 aa).

An N-terminal signal peptide occupies residues 1-26; sequence MKALKKVSNILCVLGLCTLMGGTSYA. Zn(2+)-binding residues include Trp-27, His-37, Asp-82, His-94, His-152, Asp-156, His-162, His-174, and Glu-178. In terms of domain architecture, Zn-dependent PLC spans 27-276; sequence WDGKKDGTGT…NEVSNGNTGD (250 aa). The tract at residues 273 to 281 is linker; that stretch reads NTGDNDSLT. The PLAT domain maps to 282–398; sequence NEFNIVLKTA…TGNETYYINK (117 aa). Residues Gly-297, Thr-298, Asp-299, Asp-319, Asn-320, Gly-322, Asn-323, Asp-324, and Asp-363 each contribute to the Ca(2+) site.

The protein belongs to the bacterial zinc-metallophospholipase C family. The cofactor is Ca(2+). Zn(2+) serves as cofactor.

It is found in the secreted. It carries out the reaction a 1,2-diacyl-sn-glycero-3-phosphocholine + H2O = phosphocholine + a 1,2-diacyl-sn-glycerol + H(+). Bacterial hemolysins are exotoxins that attack blood cell membranes and cause cell rupture. Binds to eukaryotic membranes where it hydrolyzes phosphatidylcholine. This enzyme has 10-fold less activity towards sphingomyelin than its C.perfringens counterpart, is approximately 100-fold less hemolytic against mouse erythrocytes and at least 100-fold less toxic in mice. This chain is Phospholipase C (plc), found in Paraclostridium bifermentans (Clostridium bifermentans).